Consider the following 164-residue polypeptide: Phosphopantetheine adenylyltransferase (164 aa).

Ser-10 provides a ligand contact to substrate. Residues 10–11 and His-18 each bind ATP; that span reads SF. Residues Lys-42, Met-74, and Arg-88 each coordinate substrate. ATP-binding positions include 89-91, Glu-99, and 124-130; these read GLR and YFFVSAR.

It belongs to the bacterial CoaD family. Homohexamer. It depends on Mg(2+) as a cofactor.

Its subcellular location is the cytoplasm. It carries out the reaction (R)-4'-phosphopantetheine + ATP + H(+) = 3'-dephospho-CoA + diphosphate. It participates in cofactor biosynthesis; coenzyme A biosynthesis; CoA from (R)-pantothenate: step 4/5. Its function is as follows. Reversibly transfers an adenylyl group from ATP to 4'-phosphopantetheine, yielding dephospho-CoA (dPCoA) and pyrophosphate. This is Phosphopantetheine adenylyltransferase from Anaeromyxobacter dehalogenans (strain 2CP-1 / ATCC BAA-258).